The primary structure comprises 208 residues: Uracil phosphoribosyltransferase (208 aa).

5-phospho-alpha-D-ribose 1-diphosphate is bound by residues arginine 77, arginine 102, and 128-136 (DPMLATGGT). Uracil-binding positions include isoleucine 191 and 196-198 (GDI). Residue aspartate 197 coordinates 5-phospho-alpha-D-ribose 1-diphosphate.

It belongs to the UPRTase family. Mg(2+) is required as a cofactor.

The catalysed reaction is UMP + diphosphate = 5-phospho-alpha-D-ribose 1-diphosphate + uracil. It participates in pyrimidine metabolism; UMP biosynthesis via salvage pathway; UMP from uracil: step 1/1. Its activity is regulated as follows. Allosterically activated by GTP. Catalyzes the conversion of uracil and 5-phospho-alpha-D-ribose 1-diphosphate (PRPP) to UMP and diphosphate. The protein is Uracil phosphoribosyltransferase of Aquifex aeolicus (strain VF5).